A 409-amino-acid chain; its full sequence is Divalent metal cation transporter MntH (409 aa).

11 helical membrane passes run 19–39, 46–66, 98–118, 122–142, 155–175, 196–216, 241–261, 290–310, 320–340, 348–368, and 388–408; these read LSLM…GNFA, ASFG…AMLI, WVQA…GAAI, LLLG…TFLI, LVIG…LVFS, AVFL…IYLH, IAMT…AAAF, IFGL…TLAG, FYIP…IVIL, ILVM…VPLL, and ILGK…LVSL.

This sequence belongs to the NRAMP family.

The protein resides in the cell inner membrane. H(+)-stimulated, divalent metal cation uptake system. The protein is Divalent metal cation transporter MntH of Yersinia enterocolitica serotype O:8 / biotype 1B (strain NCTC 13174 / 8081).